The chain runs to 134 residues: Ribosome-binding factor A (134 aa).

It belongs to the RbfA family. Monomer. Binds 30S ribosomal subunits, but not 50S ribosomal subunits or 70S ribosomes.

It is found in the cytoplasm. One of several proteins that assist in the late maturation steps of the functional core of the 30S ribosomal subunit. Associates with free 30S ribosomal subunits (but not with 30S subunits that are part of 70S ribosomes or polysomes). Required for efficient processing of 16S rRNA. May interact with the 5'-terminal helix region of 16S rRNA. The polypeptide is Ribosome-binding factor A (Sinorhizobium medicae (strain WSM419) (Ensifer medicae)).